The primary structure comprises 211 residues: tRNA (guanine-N(7)-)-methyltransferase (211 aa).

S-adenosyl-L-methionine is bound by residues Glu-43, Glu-68, Asp-95, and Asp-117. Residue Asp-117 is part of the active site. Substrate is bound by residues Lys-121, Asp-153, and 190–193 (TEYE).

Belongs to the class I-like SAM-binding methyltransferase superfamily. TrmB family.

The catalysed reaction is guanosine(46) in tRNA + S-adenosyl-L-methionine = N(7)-methylguanosine(46) in tRNA + S-adenosyl-L-homocysteine. The protein operates within tRNA modification; N(7)-methylguanine-tRNA biosynthesis. In terms of biological role, catalyzes the formation of N(7)-methylguanine at position 46 (m7G46) in tRNA. The chain is tRNA (guanine-N(7)-)-methyltransferase from Staphylococcus saprophyticus subsp. saprophyticus (strain ATCC 15305 / DSM 20229 / NCIMB 8711 / NCTC 7292 / S-41).